The chain runs to 537 residues: CTP synthase (537 aa).

Residues 1–265 (MTKYIFVTGG…GKYLTKRLKL (265 aa)) are amidoligase domain. Ser-13 provides a ligand contact to CTP. Ser-13 is a UTP binding site. 14 to 19 (GLGKGI) lines the ATP pocket. Residue Tyr-54 participates in L-glutamine binding. Asp-71 contacts ATP. Mg(2+) is bound by residues Asp-71 and Glu-139. CTP is bound by residues 146-148 (DIE), 186-191 (KTKPTQ), and Lys-222. UTP-binding positions include 186 to 191 (KTKPTQ) and Lys-222. Positions 290–532 (EIAIVGKYVK…VRAAKEYKQE (243 aa)) constitute a Glutamine amidotransferase type-1 domain. L-glutamine is bound at residue Gly-351. The Nucleophile; for glutamine hydrolysis role is filled by Cys-378. L-glutamine contacts are provided by residues 379 to 382 (FGFQ), Glu-402, and Arg-459. Active-site residues include His-505 and Glu-507.

This sequence belongs to the CTP synthase family. In terms of assembly, homotetramer.

It carries out the reaction UTP + L-glutamine + ATP + H2O = CTP + L-glutamate + ADP + phosphate + 2 H(+). The catalysed reaction is L-glutamine + H2O = L-glutamate + NH4(+). The enzyme catalyses UTP + NH4(+) + ATP = CTP + ADP + phosphate + 2 H(+). It functions in the pathway pyrimidine metabolism; CTP biosynthesis via de novo pathway; CTP from UDP: step 2/2. Its activity is regulated as follows. Allosterically activated by GTP, when glutamine is the substrate; GTP has no effect on the reaction when ammonia is the substrate. The allosteric effector GTP functions by stabilizing the protein conformation that binds the tetrahedral intermediate(s) formed during glutamine hydrolysis. Inhibited by the product CTP, via allosteric rather than competitive inhibition. Functionally, catalyzes the ATP-dependent amination of UTP to CTP with either L-glutamine or ammonia as the source of nitrogen. Regulates intracellular CTP levels through interactions with the four ribonucleotide triphosphates. In Pyrococcus furiosus (strain ATCC 43587 / DSM 3638 / JCM 8422 / Vc1), this protein is CTP synthase.